Here is a 244-residue protein sequence, read N- to C-terminus: 7-cyano-7-deazaguanine synthase (244 aa).

14–24 lines the ATP pocket; the sequence is FSGGQDSATCV. 4 residues coordinate Zn(2+): Cys-202, Cys-217, Cys-220, and Cys-223.

Belongs to the QueC family. Zn(2+) serves as cofactor.

The enzyme catalyses 7-carboxy-7-deazaguanine + NH4(+) + ATP = 7-cyano-7-deazaguanine + ADP + phosphate + H2O + H(+). The protein operates within purine metabolism; 7-cyano-7-deazaguanine biosynthesis. Catalyzes the ATP-dependent conversion of 7-carboxy-7-deazaguanine (CDG) to 7-cyano-7-deazaguanine (preQ(0)). The sequence is that of 7-cyano-7-deazaguanine synthase from Burkholderia cenocepacia (strain HI2424).